Here is a 236-residue protein sequence, read N- to C-terminus: UPF0502 protein Bcep1808_3727 (236 aa).

It belongs to the UPF0502 family.

The polypeptide is UPF0502 protein Bcep1808_3727 (Burkholderia vietnamiensis (strain G4 / LMG 22486) (Burkholderia cepacia (strain R1808))).